Here is a 156-residue protein sequence, read N- to C-terminus: MSAVLDTPVAIRRTAMDLLARREHGRVELTRKLRQRGASDELIEPELDRLAEEGLLSEARYLESFIRYRSGSGYGPARIREELCQRGLARADIDQALRESEVNWGERMRDVWQRKFAGQRPQDPRSRAQQTRFLAYRGFPMDMIGRLLSGRDLDDY.

Belongs to the RecX family.

It localises to the cytoplasm. Modulates RecA activity. This is Regulatory protein RecX from Pseudomonas putida (strain ATCC 700007 / DSM 6899 / JCM 31910 / BCRC 17059 / LMG 24140 / F1).